Reading from the N-terminus, the 347-residue chain is Ketol-acid reductoisomerase (NADP(+)) (347 aa).

The KARI N-terminal Rossmann domain maps to 3–182 (TKMFYDKDID…GSGRAGILET (180 aa)). Residues 26–29 (YGAQ), R49, S53, and 83–86 (DELQ) contribute to the NADP(+) site. The active site involves H108. G134 serves as a coordination point for NADP(+). The 146-residue stretch at 183 to 328 (TFEEETTEDL…KKVRAMMPWI (146 aa)) folds into the KARI C-terminal knotted domain. Residues D191, E195, E227, and E231 each coordinate Mg(2+). S252 provides a ligand contact to substrate.

Belongs to the ketol-acid reductoisomerase family. The cofactor is Mg(2+).

It carries out the reaction (2R)-2,3-dihydroxy-3-methylbutanoate + NADP(+) = (2S)-2-acetolactate + NADPH + H(+). It catalyses the reaction (2R,3R)-2,3-dihydroxy-3-methylpentanoate + NADP(+) = (S)-2-ethyl-2-hydroxy-3-oxobutanoate + NADPH + H(+). It participates in amino-acid biosynthesis; L-isoleucine biosynthesis; L-isoleucine from 2-oxobutanoate: step 2/4. Its pathway is amino-acid biosynthesis; L-valine biosynthesis; L-valine from pyruvate: step 2/4. Involved in the biosynthesis of branched-chain amino acids (BCAA). Catalyzes an alkyl-migration followed by a ketol-acid reduction of (S)-2-acetolactate (S2AL) to yield (R)-2,3-dihydroxy-isovalerate. In the isomerase reaction, S2AL is rearranged via a Mg-dependent methyl migration to produce 3-hydroxy-3-methyl-2-ketobutyrate (HMKB). In the reductase reaction, this 2-ketoacid undergoes a metal-dependent reduction by NADPH to yield (R)-2,3-dihydroxy-isovalerate. In Leuconostoc mesenteroides subsp. mesenteroides (strain ATCC 8293 / DSM 20343 / BCRC 11652 / CCM 1803 / JCM 6124 / NCDO 523 / NBRC 100496 / NCIMB 8023 / NCTC 12954 / NRRL B-1118 / 37Y), this protein is Ketol-acid reductoisomerase (NADP(+)).